The sequence spans 359 residues: Phospho-N-acetylmuramoyl-pentapeptide-transferase (359 aa).

A run of 10 helical transmembrane segments spans residues 26-46 (TIYA…WLIR), 75-95 (GGVL…NLTI), 97-117 (YVWL…ADDY), 134-154 (LACE…KPGF), 166-186 (VLPD…VGAA), 197-217 (GLAI…AYFA), 233-253 (GVGE…GFLW), 261-281 (VFMG…LAIV), 286-306 (ILLA…IFQV), and 336-356 (KVIV…ISTL).

The protein belongs to the glycosyltransferase 4 family. MraY subfamily. Mg(2+) serves as cofactor.

It localises to the cell inner membrane. It carries out the reaction UDP-N-acetyl-alpha-D-muramoyl-L-alanyl-gamma-D-glutamyl-meso-2,6-diaminopimeloyl-D-alanyl-D-alanine + di-trans,octa-cis-undecaprenyl phosphate = di-trans,octa-cis-undecaprenyl diphospho-N-acetyl-alpha-D-muramoyl-L-alanyl-D-glutamyl-meso-2,6-diaminopimeloyl-D-alanyl-D-alanine + UMP. It participates in cell wall biogenesis; peptidoglycan biosynthesis. Functionally, catalyzes the initial step of the lipid cycle reactions in the biosynthesis of the cell wall peptidoglycan: transfers peptidoglycan precursor phospho-MurNAc-pentapeptide from UDP-MurNAc-pentapeptide onto the lipid carrier undecaprenyl phosphate, yielding undecaprenyl-pyrophosphoryl-MurNAc-pentapeptide, known as lipid I. In Syntrophus aciditrophicus (strain SB), this protein is Phospho-N-acetylmuramoyl-pentapeptide-transferase.